Here is a 469-residue protein sequence, read N- to C-terminus: GDNF family receptor alpha-1 (469 aa).

The first 27 residues, 1–27 (MFLALLYLALPLADVLLSAEVSGLPGG), serve as a signal peptide directing secretion. 3 tandem repeats follow at residues 28–116 (DRLD…LQGN), 149–237 (KGNN…YEDR), and 238–341 (EKPN…KNAI). A disulfide bridge connects residues C39 and C45. 2 N-linked (GlcNAc...) asparagine glycosylation sites follow: N62 and N163. Intrachain disulfides connect C153–C213, C160–C166, C177–C191, C186–C232, C215–C220, C242–C312, C249–C255, C266–C284, C276–C336, and C314–C324. N346 and N405 each carry an N-linked (GlcNAc...) asparagine glycan. S430 carries the GPI-anchor amidated serine lipid modification. The propeptide at 431-469 (HISSENSFALPTSFYPSTPLILMTIALSLFLFLSSSVVL) is removed in mature form.

This sequence belongs to the GDNFR family. As to quaternary structure, interacts with GDNF ligand and RET: forms a 2:2:2 ternary complex composed of GDNF ligand, GFRA1 and RET receptor.

The protein resides in the cell membrane. It localises to the golgi apparatus. It is found in the trans-Golgi network. Its subcellular location is the endosome. The protein localises to the multivesicular body. Its function is as follows. Coreceptor for GDNF, a neurotrophic factor that enhances survival and morphological differentiation of dopaminergic neurons and increases their high-affinity dopamine uptake. GDNF-binding leads to autophosphorylation and activation of the RET receptor. In Gallus gallus (Chicken), this protein is GDNF family receptor alpha-1 (GFRA1).